Here is a 311-residue protein sequence, read N- to C-terminus: Putative mitochondrial transporter UCP3 (311 aa).

Residues 1–10 (MVGLKPSEVP) are Mitochondrial intermembrane-facing. Residues 11–32 (PTTAVKFLGAGTAACFADLLTF) form a helical membrane-spanning segment. 3 Solcar repeats span residues 11–105 (PTTA…VKQF), 114–205 (SSIT…IKEK), and 214–299 (DNFP…LKRA). Over 33–76 (PLDTAKVRLQIQGENQATQAARRIQYRGVLGTILTMVRTEGPRS) the chain is Mitochondrial matrix. The helical transmembrane segment at 77–99 (PYNGLVAGLQRQMSFASIRIGLY) threads the bilayer. Topologically, residues 100–119 (DSVKQFYTPKGSDHSSITTR) are mitochondrial intermembrane. The chain crosses the membrane as a helical span at residues 120–136 (ILAGCTTGAMAVSCAQP). At 137–182 (TDVVKVRFQASIHLGAGSNRKYSGTMDAYRTIAREEGVRGLWKGTL) the chain is on the mitochondrial matrix side. A helical transmembrane segment spans residues 183 to 199 (PNITRNAIVNCAEMVTY). The Mitochondrial intermembrane portion of the chain corresponds to 200–216 (DIIKEKLLDYHLLTDNF). A helical membrane pass occupies residues 217–236 (PCHLISAFGAGFCATVVASP). Topologically, residues 237 to 270 (VDVVKTRYMNSPPGQYCSPLDCMLKMVTQEGPTA) are mitochondrial matrix. A helical transmembrane segment spans residues 271–293 (FYKGFTPSFLRLGTWNVVMFVTY). The tract at residues 278–300 (SFLRLGTWNVVMFVTYEQLKRAL) is purine nucleotide binding. Over 294–311 (EQLKRALMKVQMLRESPF) the chain is Mitochondrial intermembrane.

The protein belongs to the mitochondrial carrier (TC 2.A.29) family. In terms of assembly, interacts with HAX1; the interaction is direct and calcium-dependent.

Its subcellular location is the mitochondrion inner membrane. Putative transmembrane transporter that plays a role in mitochondrial metabolism via an as yet unclear mechanism. Originally, this mitochondrial protein was thought to act as a proton transmembrane transporter from the mitochondrial intermembrane space into the matrix, causing proton leaks through the inner mitochondrial membrane, thereby uncoupling mitochondrial membrane potential generation from ATP synthesis. However, this function is controversial and uncoupling may not be the function, or at least not the main function, but rather a consequence of more conventional metabolite transporter activity. In Canis lupus familiaris (Dog), this protein is Putative mitochondrial transporter UCP3.